Reading from the N-terminus, the 250-residue chain is Envelope glycoprotein L (250 aa).

Residues 1 to 18 (MELLLFVMSLILLTFSKA) form the signal peptide. Residues 31 to 239 (KLDDCIAAVI…EAYNSKLPFR (209 aa)) form the gL betaherpesvirus-type domain. The cysteines at positions 136 and 141 are disulfide-linked.

Belongs to the herpesviridae glycoprotein L (gL) family. Betaherpesvirinae gL subfamily. In terms of assembly, interacts with glycoprotein H (gH); this interaction is necessary for the correct processing and cell surface expression of gH. Part of a gH-gL-gO complex.

The protein resides in the virion membrane. It is found in the host cell membrane. It localises to the host Golgi apparatus. Its subcellular location is the host trans-Golgi network. Functionally, the heterodimer glycoprotein H-glycoprotein L is required for the fusion of viral and plasma membranes leading to virus entry into the host cell. Acts as a functional inhibitor of gH and maintains gH in an inhibited form. Upon binding to host integrins, gL dissociates from gH leading to activation of the viral fusion glycoproteins gB and gH. In Homo sapiens (Human), this protein is Envelope glycoprotein L.